Here is a 93-residue protein sequence, read N- to C-terminus: MRKDIHPNYQEVLFHDTNADVFFLTRSTVKTKTTREYEGSEYPYYPLDISSASHPFYTGEQRKTSTEGRVASFNKRFGAFGGRKKAADTDAAE.

This sequence belongs to the bacterial ribosomal protein bL31 family. Type B subfamily. In terms of assembly, part of the 50S ribosomal subunit.

This chain is Large ribosomal subunit protein bL31B, found in Psychrobacter arcticus (strain DSM 17307 / VKM B-2377 / 273-4).